We begin with the raw amino-acid sequence, 232 residues long: Ethylene-responsive transcription factor ERF025 (232 aa).

Positions 1–29 are enriched in polar residues; sequence MSNNNNSPTTVNQETTTSREVSITLPTDQ. The tract at residues 1–63 is disordered; sequence MSNNNNSPTT…TATGLSGKHS (63 aa). Residues 30–50 show a composition bias toward low complexity; sequence SPQTSPGSSSSPSPRPSGGSP. Residues 64-120 constitute a DNA-binding region (AP2/ERF); it reads IFRGIRLRNGKWVSEIREPRKTTRIWLGTYPVPEMAAAAYDVAALALKGPDAVLNFP. Residues 213–232 form a disordered region; the sequence is PTMEDDSPENHEGDNLWSYK.

Belongs to the AP2/ERF transcription factor family. ERF subfamily.

It localises to the nucleus. In terms of biological role, probably acts as a transcriptional activator. Binds to the GCC-box pathogenesis-related promoter element. May be involved in the regulation of gene expression by stress factors and by components of stress signal transduction pathways. In Arabidopsis thaliana (Mouse-ear cress), this protein is Ethylene-responsive transcription factor ERF025 (ERF025).